The chain runs to 874 residues: Alanine--tRNA ligase (874 aa).

Positions 564, 568, 665, and 669 each coordinate Zn(2+).

Belongs to the class-II aminoacyl-tRNA synthetase family. Requires Zn(2+) as cofactor.

Its subcellular location is the cytoplasm. It catalyses the reaction tRNA(Ala) + L-alanine + ATP = L-alanyl-tRNA(Ala) + AMP + diphosphate. In terms of biological role, catalyzes the attachment of alanine to tRNA(Ala) in a two-step reaction: alanine is first activated by ATP to form Ala-AMP and then transferred to the acceptor end of tRNA(Ala). Also edits incorrectly charged Ser-tRNA(Ala) and Gly-tRNA(Ala) via its editing domain. In Burkholderia thailandensis (strain ATCC 700388 / DSM 13276 / CCUG 48851 / CIP 106301 / E264), this protein is Alanine--tRNA ligase.